A 211-amino-acid polypeptide reads, in one-letter code: Ribosomal RNA small subunit methyltransferase G (211 aa).

S-adenosyl-L-methionine-binding positions include Gly73, Ile125–Glu126, and Arg141.

Belongs to the methyltransferase superfamily. RNA methyltransferase RsmG family.

It localises to the cytoplasm. The catalysed reaction is guanosine(527) in 16S rRNA + S-adenosyl-L-methionine = N(7)-methylguanosine(527) in 16S rRNA + S-adenosyl-L-homocysteine. Its function is as follows. Specifically methylates the N7 position of guanine in position 527 of 16S rRNA. This is Ribosomal RNA small subunit methyltransferase G from Methylobacterium radiotolerans (strain ATCC 27329 / DSM 1819 / JCM 2831 / NBRC 15690 / NCIMB 10815 / 0-1).